Consider the following 430-residue polypeptide: Serine--tRNA ligase (430 aa).

237–239 (TAE) contacts L-serine. 268–270 (RSE) lines the ATP pocket. Glu-291 provides a ligand contact to L-serine. Residue 355 to 358 (EISS) coordinates ATP. Ser-391 contributes to the L-serine binding site.

Belongs to the class-II aminoacyl-tRNA synthetase family. Type-1 seryl-tRNA synthetase subfamily. As to quaternary structure, homodimer. The tRNA molecule binds across the dimer.

Its subcellular location is the cytoplasm. It carries out the reaction tRNA(Ser) + L-serine + ATP = L-seryl-tRNA(Ser) + AMP + diphosphate + H(+). It catalyses the reaction tRNA(Sec) + L-serine + ATP = L-seryl-tRNA(Sec) + AMP + diphosphate + H(+). It functions in the pathway aminoacyl-tRNA biosynthesis; selenocysteinyl-tRNA(Sec) biosynthesis; L-seryl-tRNA(Sec) from L-serine and tRNA(Sec): step 1/1. Functionally, catalyzes the attachment of serine to tRNA(Ser). Is also able to aminoacylate tRNA(Sec) with serine, to form the misacylated tRNA L-seryl-tRNA(Sec), which will be further converted into selenocysteinyl-tRNA(Sec). The protein is Serine--tRNA ligase of Escherichia coli O139:H28 (strain E24377A / ETEC).